Reading from the N-terminus, the 86-residue chain is RNA-binding protein Hfq (86 aa).

The 60-residue stretch at 9 to 68 (DPYLNTLRKEKVPVSIYLVNGIKLQGSIESFDQFVVLLKNTVSQMVYKHAISTVVPARPV) folds into the Sm domain. A disordered region spans residues 67–86 (PVRLPSPTDGEHGDSEPGNA). Residues 75–86 (DGEHGDSEPGNA) are compositionally biased toward basic and acidic residues.

It belongs to the Hfq family. In terms of assembly, homohexamer.

In terms of biological role, RNA chaperone that binds small regulatory RNA (sRNAs) and mRNAs to facilitate mRNA translational regulation in response to envelope stress, environmental stress and changes in metabolite concentrations. Also binds with high specificity to tRNAs. The sequence is that of RNA-binding protein Hfq from Pseudomonas putida (strain GB-1).